The sequence spans 619 residues: Translation initiation factor IF-2 (619 aa).

Low complexity-rich tracts occupy residues 1–18 and 98–111; these read MTLN…TTPK and PPQL…LTKT. Disordered regions lie at residues 1 to 24 and 90 to 113; these read MTLN…KETD and SEPQ…KTKP. Residues 121–289 enclose the tr-type G domain; it reads KKSPIVTIMG…ILLVSEIQNL (169 aa). A G1 region spans residues 130-137; it reads GHVDHGKT. Residue 130–137 participates in GTP binding; that stretch reads GHVDHGKT. Residues 155–159 are G2; it reads GITQH. The interval 176–179 is G3; it reads DTPG. Residues 176–180 and 230–233 each bind GTP; these read DTPGH and NKID. Residues 230–233 are G4; sequence NKID. A G5 region spans residues 266 to 268; it reads SAL.

Belongs to the TRAFAC class translation factor GTPase superfamily. Classic translation factor GTPase family. IF-2 subfamily.

The protein localises to the cytoplasm. One of the essential components for the initiation of protein synthesis. Protects formylmethionyl-tRNA from spontaneous hydrolysis and promotes its binding to the 30S ribosomal subunits. Also involved in the hydrolysis of GTP during the formation of the 70S ribosomal complex. The polypeptide is Translation initiation factor IF-2 (Onion yellows phytoplasma (strain OY-M)).